The sequence spans 243 residues: Pyridoxine 5'-phosphate synthase (243 aa).

Asn9 contributes to the 3-amino-2-oxopropyl phosphate binding site. A 1-deoxy-D-xylulose 5-phosphate-binding site is contributed by 11-12 (DH). Arg20 lines the 3-amino-2-oxopropyl phosphate pocket. His45 acts as the Proton acceptor in catalysis. 1-deoxy-D-xylulose 5-phosphate contacts are provided by Arg47 and His52. The Proton acceptor role is filled by Glu72. Thr102 provides a ligand contact to 1-deoxy-D-xylulose 5-phosphate. Catalysis depends on His193, which acts as the Proton donor. 3-amino-2-oxopropyl phosphate is bound by residues Gly194 and 215–216 (GH).

Belongs to the PNP synthase family. In terms of assembly, homooctamer; tetramer of dimers.

It is found in the cytoplasm. It carries out the reaction 3-amino-2-oxopropyl phosphate + 1-deoxy-D-xylulose 5-phosphate = pyridoxine 5'-phosphate + phosphate + 2 H2O + H(+). It functions in the pathway cofactor biosynthesis; pyridoxine 5'-phosphate biosynthesis; pyridoxine 5'-phosphate from D-erythrose 4-phosphate: step 5/5. Catalyzes the complicated ring closure reaction between the two acyclic compounds 1-deoxy-D-xylulose-5-phosphate (DXP) and 3-amino-2-oxopropyl phosphate (1-amino-acetone-3-phosphate or AAP) to form pyridoxine 5'-phosphate (PNP) and inorganic phosphate. The chain is Pyridoxine 5'-phosphate synthase from Salmonella paratyphi A (strain ATCC 9150 / SARB42).